A 276-amino-acid polypeptide reads, in one-letter code: Undecaprenyl-diphosphatase (276 aa).

6 helical membrane-spanning segments follow: residues 43 to 63 (RAMAFNIIIQLAAILAVVWEF), 85 to 105 (ANLLLAFMPAVVLGVLFADLI), 109 to 129 (LFNPITVATALVIGGVIMLWA), 183 to 203 (AATEFSFFLAMPTMVGAAVYS), 214 to 234 (SDLPVFAIGFVTSFIFAMIAV), and 249 to 269 (FAWYRIAFGLLILATWQFGWV).

The protein belongs to the UppP family.

Its subcellular location is the cell inner membrane. The catalysed reaction is di-trans,octa-cis-undecaprenyl diphosphate + H2O = di-trans,octa-cis-undecaprenyl phosphate + phosphate + H(+). In terms of biological role, catalyzes the dephosphorylation of undecaprenyl diphosphate (UPP). Confers resistance to bacitracin. The sequence is that of Undecaprenyl-diphosphatase from Pseudomonas putida (strain W619).